The primary structure comprises 254 residues: Chaperone protein PmfD (254 aa).

Residues 1–26 form the signal peptide; it reads MNSFSTLKTLFCGSLLALSLVNTTQA.

The protein belongs to the periplasmic pilus chaperone family.

The protein resides in the periplasm. Its function is as follows. Involved in the biogenesis of the PMF fimbria. This is Chaperone protein PmfD (pmfD) from Proteus mirabilis (strain HI4320).